A 463-amino-acid chain; its full sequence is Thiamine-repressible acid phosphatase SPBC21H7.03c (463 aa).

Residues 1 to 18 (MQLCIISLWFLAAFIVNA) form the signal peptide. The Nucleophile role is filled by histidine 69. N-linked (GlcNAc...) asparagine glycosylation is found at asparagine 98, asparagine 104, asparagine 221, and asparagine 324. The Proton donor role is filled by aspartate 341. Residues asparagine 439 and asparagine 458 are each glycosylated (N-linked (GlcNAc...) asparagine).

This sequence belongs to the histidine acid phosphatase family.

The protein localises to the secreted. Its subcellular location is the cell wall. It catalyses the reaction a phosphate monoester + H2O = an alcohol + phosphate. Its function is as follows. May dephosphorylate thiamine phosphates. This chain is Thiamine-repressible acid phosphatase SPBC21H7.03c, found in Schizosaccharomyces pombe (strain 972 / ATCC 24843) (Fission yeast).